Consider the following 337-residue polypeptide: Transaldolase (337 aa).

A Nuclear localization signal motif is present at residues 1-10 (MSGSPVKRQR). Position 115 is an N6-acetyllysine (Lys115). The active-site Schiff-base intermediate with substrate is the Lys142. At Lys219 the chain carries N6-acetyllysine. Ser237 and Ser256 each carry phosphoserine. Lys269, Lys286, and Lys321 each carry N6-acetyllysine.

Belongs to the transaldolase family. Type 1 subfamily. Homodimer. Interacts with KPNA1 and KPNA4.

It localises to the nucleus. It is found in the cytoplasm. The enzyme catalyses D-sedoheptulose 7-phosphate + D-glyceraldehyde 3-phosphate = D-erythrose 4-phosphate + beta-D-fructose 6-phosphate. Its pathway is carbohydrate degradation; pentose phosphate pathway; D-glyceraldehyde 3-phosphate and beta-D-fructose 6-phosphate from D-ribose 5-phosphate and D-xylulose 5-phosphate (non-oxidative stage): step 2/3. Functionally, catalyzes the rate-limiting step of the non-oxidative phase in the pentose phosphate pathway. Catalyzes the reversible conversion of sedheptulose-7-phosphate and D-glyceraldehyde 3-phosphate into erythrose-4-phosphate and beta-D-fructose 6-phosphate. This chain is Transaldolase (TALDO1), found in Cricetulus griseus (Chinese hamster).